We begin with the raw amino-acid sequence, 417 residues long: WD repeat and FYVE domain-containing protein 2 (417 aa).

WD repeat units lie at residues 29–68 (GHVA…QFWP), 119–157 (CHAG…NKVG), 202–241 (AHTN…GEAY), and 245–284 (GHNG…VETP). An FYVE-type zinc finger spans residues 286–357 (WKTSDCCQKC…ICNDCAGRMK (72 aa)). Zn(2+) contacts are provided by Cys292, Cys295, Cys319, Cys322, Cys327, Cys330, Cys349, and Cys352. The stretch at 373-412 (EIRTGITAMHLQETLGLLVTSGQNRVVMIWDVRSVCSAPS) is one WD 5 repeat.

Plays a role in coelomocyte endocytosis. This Caenorhabditis briggsae protein is WD repeat and FYVE domain-containing protein 2.